The primary structure comprises 206 residues: Large ribosomal subunit protein uL3 (206 aa).

A disordered region spans residues 126-155; sequence HGHAGGPGAHGSRFHRHPGSMGANSTPSRV.

Belongs to the universal ribosomal protein uL3 family. In terms of assembly, part of the 50S ribosomal subunit. Forms a cluster with proteins L14 and L19.

In terms of biological role, one of the primary rRNA binding proteins, it binds directly near the 3'-end of the 23S rRNA, where it nucleates assembly of the 50S subunit. The sequence is that of Large ribosomal subunit protein uL3 from Leptospira interrogans serogroup Icterohaemorrhagiae serovar copenhageni (strain Fiocruz L1-130).